The chain runs to 235 residues: Glucosamine-6-phosphate deaminase (235 aa).

The active-site Proton acceptor; for enolization step is Asp-62. The active-site For ring-opening step is the Asn-128. Catalysis depends on His-130, which acts as the Proton acceptor; for ring-opening step. Glu-135 (for ring-opening step) is an active-site residue.

Belongs to the glucosamine/galactosamine-6-phosphate isomerase family. NagB subfamily.

It carries out the reaction alpha-D-glucosamine 6-phosphate + H2O = beta-D-fructose 6-phosphate + NH4(+). It functions in the pathway amino-sugar metabolism; N-acetylneuraminate degradation; D-fructose 6-phosphate from N-acetylneuraminate: step 5/5. In terms of biological role, catalyzes the reversible isomerization-deamination of glucosamine 6-phosphate (GlcN6P) to form fructose 6-phosphate (Fru6P) and ammonium ion. The polypeptide is Glucosamine-6-phosphate deaminase (Lactococcus lactis subsp. cremoris (strain SK11)).